We begin with the raw amino-acid sequence, 202 residues long: Matrix protein (202 aa).

The disordered stretch occupies residues 14–33 (EDTQKPSPASAPPDGDDLWL). The short motif at 35–38 (PPEY) is the PPXY motif element. The interval 115–151 (KLRRTLIFQWADSRGPLEGEELEHSQEITWDDDTEFV) is essential for glycoprotein binding.

The protein belongs to the lyssavirus matrix protein family. As to quaternary structure, homomultimer. Interacts with nucleoprotein and with the cytoplasmic domain of glycoprotein. Interacts with host ATP6V1A; this interaction plays an important role in virion uncoating after viral entry.

It localises to the virion membrane. The protein resides in the host endomembrane system. The protein localises to the host cytoplasm. Functionally, plays a major role in assembly, budding and uncoating of virion after membrane fusion. Completely covers the ribonucleoprotein coil and keep it in condensed bullet-shaped form. Inhibits viral transcription and stimulates replication. Plays a major role in early induction of TRAIL-mediated apoptosis in infected neurons. Inhibits the integrated stress response (ISR) in the infected cell by blocking the formation of stress granules. This chain is Matrix protein (M), found in Rabies virus (strain HEP-Flury) (RABV).